Reading from the N-terminus, the 177-residue chain is 3-hydroxydecanoyl-[acyl-carrier-protein] dehydratase (177 aa).

The active site involves histidine 76.

It belongs to the thioester dehydratase family. FabA subfamily. In terms of assembly, homodimer.

The protein localises to the cytoplasm. The catalysed reaction is a (3R)-hydroxyacyl-[ACP] = a (2E)-enoyl-[ACP] + H2O. It catalyses the reaction (3R)-hydroxydecanoyl-[ACP] = (2E)-decenoyl-[ACP] + H2O. It carries out the reaction (2E)-decenoyl-[ACP] = (3Z)-decenoyl-[ACP]. The protein operates within lipid metabolism; fatty acid biosynthesis. Its function is as follows. Necessary for the introduction of cis unsaturation into fatty acids. Catalyzes the dehydration of (3R)-3-hydroxydecanoyl-ACP to E-(2)-decenoyl-ACP and then its isomerization to Z-(3)-decenoyl-ACP. Can catalyze the dehydratase reaction for beta-hydroxyacyl-ACPs with saturated chain lengths up to 16:0, being most active on intermediate chain length. The polypeptide is 3-hydroxydecanoyl-[acyl-carrier-protein] dehydratase (Mannheimia succiniciproducens (strain KCTC 0769BP / MBEL55E)).